The primary structure comprises 264 residues: Thiazole synthase (264 aa).

Lys-106 serves as the catalytic Schiff-base intermediate with DXP. 1-deoxy-D-xylulose 5-phosphate contacts are provided by residues Gly-167, 193–194 (AG), and 215–216 (NS).

The protein belongs to the ThiG family. In terms of assembly, homotetramer. Forms heterodimers with either ThiH or ThiS.

The protein localises to the cytoplasm. It catalyses the reaction [ThiS sulfur-carrier protein]-C-terminal-Gly-aminoethanethioate + 2-iminoacetate + 1-deoxy-D-xylulose 5-phosphate = [ThiS sulfur-carrier protein]-C-terminal Gly-Gly + 2-[(2R,5Z)-2-carboxy-4-methylthiazol-5(2H)-ylidene]ethyl phosphate + 2 H2O + H(+). The protein operates within cofactor biosynthesis; thiamine diphosphate biosynthesis. Catalyzes the rearrangement of 1-deoxy-D-xylulose 5-phosphate (DXP) to produce the thiazole phosphate moiety of thiamine. Sulfur is provided by the thiocarboxylate moiety of the carrier protein ThiS. In vitro, sulfur can be provided by H(2)S. The protein is Thiazole synthase of Prochlorococcus marinus (strain MIT 9215).